The following is a 480-amino-acid chain: Sensor histidine kinase CusS (480 aa).

The Cytoplasmic segment spans residues 1 to 15 (MVSKPFQRPFSLATR). A helical transmembrane segment spans residues 16-36 (LTFFISLATIAAFFAFAWIMI). The Periplasmic segment spans residues 37 to 186 (HSVKVHFAEQ…LHYINDLMNK (150 aa)). Residues 187 to 207 (LIMTASVISILIVFIVLLAVH) form a helical membrane-spanning segment. The HAMP domain occupies 207–260 (HKGHAPIRSVSRQIQNITSKDLDVRLDPQTVPIELEQLVLSFNHMIERIEDVFT). Residues 208-480 (KGHAPIRSVS…GTRFVIILPA (273 aa)) are Cytoplasmic-facing. The Histidine kinase domain occupies 268 to 480 (DIAHEIRTPI…GTRFVIILPA (213 aa)). The residue at position 271 (His271) is a Phosphohistidine; by autocatalysis.

Autophosphorylated.

Its subcellular location is the cell inner membrane. It carries out the reaction ATP + protein L-histidine = ADP + protein N-phospho-L-histidine.. Functionally, member of the two-component regulatory system CusS/CusR involved in response to copper and silver. Acts as a copper/silver ion sensor. Activates CusR by phosphorylation. The chain is Sensor histidine kinase CusS (cusS) from Escherichia coli O6:H1 (strain CFT073 / ATCC 700928 / UPEC).